The primary structure comprises 125 residues: Basic leucine zipper transcriptional factor ATF-like (125 aa).

Residues 1-14 (MPHSSDSSDSSFSR) show a composition bias toward low complexity. The tract at residues 1–58 (MPHSSDSSDSSFSRSPPPGKQDSSDDVRRVQRREKNRIAAQKSRQRQTQKADTLHLES) is disordered. Residues 26 to 89 (DVRRVQRREK…KYFTSVLNSH (64 aa)) enclose the bZIP domain. The tract at residues 28–50 (RRVQRREKNRIAAQKSRQRQTQK) is basic motif. A Phosphoserine modification is found at Ser-43. Residue Thr-48 is modified to Phosphothreonine. Residues 54 to 75 (LHLESEDLEKQNAALRKEIKQL) form a leucine-zipper region.

This sequence belongs to the bZIP family. Heterodimer; mainly heterodimerizes with JUNB. The BATF-JUNB heterodimer interacts with IRF4 and IRF8. Interacts (via bZIP domain) with IRF4 and IRF8; the interaction is direct. Also forms heterodimers with JUN and JUND. Also interacts with IFI35. Phosphorylated on serine and threonine residues and at least one tyrosine residue. Phosphorylation at Ser-43 inhibit DNA binding activity and transforms it as a negative regulator of AP-1 mediated transcription. In terms of processing, phosphorylated. Expressed at highest levels in lung, and at lower levels in placenta, liver, kidney, spleen, and peripheral blood. Detected in SW480 colorectal cancer cell line and several hematopoietic tumor cell lines, including Raji Burkitt's lymphoma. Strongly expressed in mature B- and T-lymphocytes. Also expressed in moderate levels in lymph node and appendix and at low levels in thymus and bone marrow.

The protein resides in the nucleus. It localises to the cytoplasm. In terms of biological role, AP-1 family transcription factor that controls the differentiation of lineage-specific cells in the immune system: specifically mediates the differentiation of T-helper 17 cells (Th17), follicular T-helper cells (TfH), CD8(+) dendritic cells and class-switch recombination (CSR) in B-cells. Acts via the formation of a heterodimer with JUNB that recognizes and binds DNA sequence 5'-TGA[CG]TCA-3'. The BATF-JUNB heterodimer also forms a complex with IRF4 (or IRF8) in immune cells, leading to recognition of AICE sequence (5'-TGAnTCA/GAAA-3'), an immune-specific regulatory element, followed by cooperative binding of BATF and IRF4 (or IRF8) and activation of genes. Controls differentiation of T-helper cells producing interleukin-17 (Th17 cells) by binding to Th17-associated gene promoters: regulates expression of the transcription factor RORC itself and RORC target genes such as IL17 (IL17A or IL17B). Also involved in differentiation of follicular T-helper cells (TfH) by directing expression of BCL6 and MAF. In B-cells, involved in class-switch recombination (CSR) by controlling the expression of both AICDA and of germline transcripts of the intervening heavy-chain region and constant heavy-chain region (I(H)-C(H)). Following infection, can participate in CD8(+) dendritic cell differentiation via interaction with IRF4 and IRF8 to mediate cooperative gene activation. Regulates effector CD8(+) T-cell differentiation by regulating expression of SIRT1. Following DNA damage, part of a differentiation checkpoint that limits self-renewal of hematopoietic stem cells (HSCs): up-regulated by STAT3, leading to differentiation of HSCs, thereby restricting self-renewal of HSCs. The polypeptide is Basic leucine zipper transcriptional factor ATF-like (BATF) (Homo sapiens (Human)).